The primary structure comprises 265 residues: MPRIAIVGGSGVYDFPAENKREETVKTPYGEVKITVGVVGDEEVAFLARHGKGHSIPPHKINYRANIWALYELGVERIIATSAVGSMNPEMKPGDFVILDQIIDFTVSRPRTFYDGEESPHERKFVAHVDFTEPYCPEIRKALITAARNLGLPYHPRGTYVCTEGPRFETAAEIRAYRILGGDVVGMTQCPEAILARELEMCYATVAIVTNYAAGMSGKKLTHSEVVELMQKKSEDIVKLILAAIPLIPKERRCGCKDALKGATG.

Residues Ser10, 49 to 50 (RH), and 82 to 83 (SA) each bind phosphate. 2 disulfides stabilise this stretch: Cys136/Cys202 and Cys162/Cys190. Position 187 (Met187) interacts with substrate. Phosphate is bound at residue Thr188. 211-213 (NYA) is a binding site for substrate. Residues Cys254 and Cys256 are joined by a disulfide bond.

This sequence belongs to the PNP/MTAP phosphorylase family. MTAP subfamily. Homohexamer. Dimer of a homotrimer.

The catalysed reaction is a purine D-ribonucleoside + phosphate = a purine nucleobase + alpha-D-ribose 1-phosphate. It carries out the reaction guanosine + phosphate = alpha-D-ribose 1-phosphate + guanine. The enzyme catalyses inosine + phosphate = alpha-D-ribose 1-phosphate + hypoxanthine. It functions in the pathway purine metabolism; purine nucleoside salvage. Functionally, purine nucleoside phosphorylase which is highly specific for 6-oxopurine nucleosides. Cleaves guanosine or inosine to respective bases and sugar-1-phosphate molecules. Involved in purine salvage. This is 6-oxopurine nucleoside phosphorylase from Pyrococcus furiosus (strain ATCC 43587 / DSM 3638 / JCM 8422 / Vc1).